Consider the following 298-residue polypeptide: Zinc import ATP-binding protein ZnuC (298 aa).

One can recognise an ABC transporter domain in the interval 17–232 (IELRNAGVYR…PEYVRLFGSR (216 aa)). An ATP-binding site is contributed by 49–56 (GQNGAGKS). A disordered region spans residues 273–298 (RGHCHVEDGHHHDHEHHHHEGGQPRA). Residues 276-298 (CHVEDGHHHDHEHHHHEGGQPRA) show a composition bias toward basic and acidic residues.

The protein belongs to the ABC transporter superfamily. Zinc importer (TC 3.A.1.15.5) family. As to quaternary structure, the complex is composed of two ATP-binding proteins (ZnuC), two transmembrane proteins (ZnuB) and a solute-binding protein (ZnuA).

It localises to the cell inner membrane. The catalysed reaction is Zn(2+)(out) + ATP(in) + H2O(in) = Zn(2+)(in) + ADP(in) + phosphate(in) + H(+)(in). Its function is as follows. Part of the ABC transporter complex ZnuABC involved in zinc import. Responsible for energy coupling to the transport system. This chain is Zinc import ATP-binding protein ZnuC, found in Brucella melitensis biotype 1 (strain ATCC 23456 / CCUG 17765 / NCTC 10094 / 16M).